The sequence spans 490 residues: MDLVVFLALTLSCLILLSLWRQSSGRGKLPPGPTPLPIIGNFLQIDVKNISQSFTNFSKAYGPVFTLYLGSKPTVILHGYEAVKEALIDRGEEFAGRGSFPMAEKIIKGFGVVFSNGNRWKEMRRFTLMTLRNLGMGKRNIEDRVQEEAQCLVEELRKTKGSPCDPTFILSCAPCNVICSIIFQNRFDYKDKEFLILMDKINENVKILSSPWLQVCNSFPSLIDYCPGSHHKIVKNFNYLKSYLLEKIKEHKESLDVTNPRDFIDYYLIKQKQVNHIEQSEFSLENLASTINDLFGAGTETTSTTLRYALLLLLKYPDVTAKVQEEIDRVVGRHRSPCMQDRSHMPYTDAMIHEVQRFIDLLPTSLPHAVTCDIKFRKYLIPKGTTVITSLSSVLHDSKEFPNPEMFDPGHFLNGNGNFKKSDYFMPFSTGKRICAGEGLARMELFLILTTILQNFKLKSLVHPKEIDITPVMNGFASLPPPYQLCFIPL.

An N-terminal signal peptide occupies residues 1-25 (MDLVVFLALTLSCLILLSLWRQSSG). N6-acetyllysine occurs at positions 249, 252, and 375. Cys-435 is a heme binding site.

The protein belongs to the cytochrome P450 family. Requires heme as cofactor. In terms of tissue distribution, expressed in liver as well as in extrahepatic tissues including brain, kidney, lung, heart, and intestine.

Its subcellular location is the endoplasmic reticulum membrane. It localises to the microsome membrane. It carries out the reaction an organic molecule + reduced [NADPH--hemoprotein reductase] + O2 = an alcohol + oxidized [NADPH--hemoprotein reductase] + H2O + H(+). The catalysed reaction is (5Z,8Z,11Z,14Z)-eicosatetraenoate + reduced [NADPH--hemoprotein reductase] + O2 = 14,15-epoxy-(5Z,8Z,11Z)-eicosatrienoate + oxidized [NADPH--hemoprotein reductase] + H2O + H(+). It functions in the pathway lipid metabolism; arachidonate metabolism. Functionally, a cytochrome P450 monooxygenase that selectively catalyzes the epoxidation of 14,15 double bond of (5Z,8Z,11Z,14Z)-eicosatetraenoic acid (arachidonate) forming 14,15-epoxyeicosatrienoic acid (14,15-EET) regioisomer. Mechanistically, uses molecular oxygen inserting one oxygen atom into a substrate, and reducing the second into a water molecule, with two electrons provided by NADPH via cytochrome P450 reductase (CPR; NADPH--hemoprotein reductase). This chain is Cytochrome P450 2C29, found in Mus musculus (Mouse).